A 293-amino-acid chain; its full sequence is ATP synthase gamma chain (293 aa).

This sequence belongs to the ATPase gamma chain family. F-type ATPases have 2 components, CF(1) - the catalytic core - and CF(0) - the membrane proton channel. CF(1) has five subunits: alpha(3), beta(3), gamma(1), delta(1), epsilon(1). CF(0) has three main subunits: a, b and c.

The protein resides in the cell membrane. Its function is as follows. Produces ATP from ADP in the presence of a proton gradient across the membrane. The gamma chain is believed to be important in regulating ATPase activity and the flow of protons through the CF(0) complex. The sequence is that of ATP synthase gamma chain from Streptococcus agalactiae serotype Ia (strain ATCC 27591 / A909 / CDC SS700).